Here is a 184-residue protein sequence, read N- to C-terminus: MPTPKKGARLGGSASHQKKILSNLAASLFEHGAIKTTDAKAKTLRPYAEKLITKAKSGTVADRRNVLALIPNKDIVAYLFDELAPKFENRAGGYTRIIKLENRKGDNAPMSQISLVLEETVSAEATRAARAAASKQTADEAQVEETPAEEVTEETAAEETTEAAQADEAPAEEAPVEEKKDEEK.

Residues 126-184 (TRAARAAASKQTADEAQVEETPAEEVTEETAAEETTEAAQADEAPAEEAPVEEKKDEEK) form a disordered region. Residues 141-161 (AQVEETPAEEVTEETAAEETT) show a composition bias toward acidic residues.

This sequence belongs to the bacterial ribosomal protein bL17 family. Part of the 50S ribosomal subunit. Contacts protein L32.

The chain is Large ribosomal subunit protein bL17 from Corynebacterium efficiens (strain DSM 44549 / YS-314 / AJ 12310 / JCM 11189 / NBRC 100395).